The sequence spans 510 residues: MDADDTPPNLQISPTAGPLRSHHNTDGHEPNATAADQQERESTNPTHGCVNHPWANPSTATCMESPERSQQTSLFLLKHGLTRDPIHQRERVDVFPQFNKPPWVFRISKLSRLIVPIFTLNEQLCFSKLQIRDRPRFAGRGTYGRVHIYPSSKIAVKTMDSRVFNRELINAILASEGSIRAGERLGISSIVCLLGFSLQTKQLLFPAYDMDMDEYIVRLSRRLTIPDHIDRKIAHVFLDLAQALTFLNRTCGLTHLDVKCGNIFLNVDNFASLEITTAVIGDYSLVTLNTYSLCTRAIFEVGNPSHPEHVLRVPRDASQMSFRLVLSHGTNQPPEILLDYINGTGLTKYTGTLPQRVGLAIDLYALGQALLEVILLGRLPGQLPISVHRTPHYHYYGHKLSPDLALDTLAYRCVLAPYILPSDIPGDLNYNPFIHAGELNTRISRNSLRRIFQCHAVRYGVTHSKLFEGIRIPASLYPATVVTSLLCHDNSEIRSDHPLLWHDRDWIGST.

The disordered stretch occupies residues 1–63; the sequence is MDADDTPPNL…WANPSTATCM (63 aa). Positions 132-458 constitute a Protein kinase domain; the sequence is RDRPRFAGRG…RRIFQCHAVR (327 aa). Residues 138–146 and Lys-157 contribute to the ATP site; that span reads AGRGTYGRV. Asp-257 serves as the catalytic Proton acceptor.

It belongs to the protein kinase superfamily. Ser/Thr protein kinase family. Autophosphorylated.

Its subcellular location is the virion tegument. It localises to the host nucleus. The catalysed reaction is L-seryl-[protein] + ATP = O-phospho-L-seryl-[protein] + ADP + H(+). The enzyme catalyses L-threonyl-[protein] + ATP = O-phospho-L-threonyl-[protein] + ADP + H(+). Multifunctional serine/threonine kinase that plays a role in several processes including egress of virus particles from the nucleus, modulation of the actin cytoskeleton and regulation of viral and cellular gene expression. Regulates the nuclear localization of viral envelopment factor proteins 24 and 27, by phosphorylating the protein kinase ORF66, indicating a role in nuclear egress. Disrupts host nuclear lamins, including LMNA and LMNB1. Phosphorylates the viral Fc receptor composed of glycoproteins E (gE) and I (gI). Phosphorylation of glycoprotein E (gE) by UL13 alters its subcellular localization, from the host early endosome to the plasma membrane. Participates in the transcriptional regulation of cellular and viral mRNAs mainly by phosphorylating the viral transcriptional regulator IE63. The polypeptide is Serine/threonine-protein kinase UL13 homolog (Varicella-zoster virus (strain Dumas) (HHV-3)).